A 478-amino-acid polypeptide reads, in one-letter code: Lipoprotein lipase (478 aa).

An N-terminal signal peptide occupies residues 1–28; that stretch reads MESKALLLLALSVCLQSLTVSRGGLVAA. Positions 35 to 56 are interaction with GPIHBP1; sequence KDFRDIESKFALRTPEDTAEDT. Residues Cys-57 and Cys-70 are joined by a disulfide bond. Asn-73 carries N-linked (GlcNAc...) asparagine glycosylation. Tyr-124 bears the 3'-nitrotyrosine mark. Catalysis depends on Ser-162, which acts as the Nucleophile. Catalysis depends on Asp-186, which acts as the Charge relay system. Tyr-194 is subject to 3'-nitrotyrosine. 4 residues coordinate Ca(2+): Ala-197, Arg-200, Ser-202, and Asp-205. The cysteines at positions 246 and 269 are disulfide-linked. Positions 246–269 are essential for determining substrate specificity; it reads CNIGEALRVIAERGLGDVDQLVKC. His-271 serves as the catalytic Charge relay system. Asn-287 carries an N-linked (GlcNAc...) asparagine glycan. Intrachain disulfides connect Cys-294–Cys-313 and Cys-305–Cys-308. Positions 344 to 467 constitute a PLAT domain; it reads FHYQVKIHFS…KGKSPVIFVK (124 aa). Tyr-346 carries the 3'-nitrotyrosine modification. Asn-389 carries an N-linked (GlcNAc...) asparagine glycan. The tract at residues 420-424 is important for interaction with lipoprotein particles; the sequence is WSNWW. Positions 433-437 are important for heparin binding; it reads KIRVK. The tract at residues 446-470 is interaction with GPIHBP1; it reads IFCSREKMSYLQKGKSPVIFVKCHD. Cys-448 and Cys-468 form a disulfide bridge.

The protein belongs to the AB hydrolase superfamily. Lipase family. In terms of assembly, homodimer. Interacts with GPIHBP1 with 1:1 stoichiometry. Interacts with APOC2; the interaction activates LPL activity in the presence of lipids. Interaction with heparan sulfate proteoglycans is required to protect LPL against loss of activity. Associates with lipoprotein particles in blood plasma. Interacts with LMF1 and SEL1L; interaction with SEL1L is required to prevent aggregation of newly synthesized LPL in the endoplasmic reticulum (ER), and for normal export of LPL from the ER to the extracellular space. Interacts with SORL1; SORL1 acts as a sorting receptor, promoting LPL localization to endosomes and later to lysosomes, leading to degradation of newly synthesized LPL. Tyrosine nitration after lipopolysaccharide (LPS) challenge down-regulates the lipase activity. Detected in milk (at protein level).

Its subcellular location is the cell membrane. The protein resides in the secreted. The protein localises to the extracellular space. It is found in the extracellular matrix. It carries out the reaction a triacylglycerol + H2O = a diacylglycerol + a fatty acid + H(+). The catalysed reaction is a 1,2-diacyl-sn-glycero-3-phosphocholine + H2O = a 2-acyl-sn-glycero-3-phosphocholine + a fatty acid + H(+). It catalyses the reaction 1,2,3-tri-(9Z-octadecenoyl)-glycerol + H2O = di-(9Z)-octadecenoylglycerol + (9Z)-octadecenoate + H(+). The enzyme catalyses 1,2-di-(9Z-octadecenoyl)-sn-glycero-3-phosphocholine + H2O = (9Z-octadecenoyl)-sn-glycero-3-phosphocholine + (9Z)-octadecenoate + H(+). It carries out the reaction 1,2,3-tributanoylglycerol + H2O = dibutanoylglycerol + butanoate + H(+). The catalysed reaction is 1,2-dihexadecanoyl-sn-glycero-3-phosphocholine + H2O = hexadecanoyl-sn-glycero-3-phosphocholine + hexadecanoate + H(+). With respect to regulation, the apolipoprotein APOC2 acts as a coactivator of LPL activity. Ca(2+) binding promotes protein stability and formation of the active homodimer. Interaction with GPIHBP1 protects LPL against inactivation by ANGPTL4. In terms of biological role, key enzyme in triglyceride metabolism. Catalyzes the hydrolysis of triglycerides from circulating chylomicrons and very low density lipoproteins (VLDL), and thereby plays an important role in lipid clearance from the blood stream, lipid utilization and storage. Although it has both phospholipase and triglyceride lipase activities it is primarily a triglyceride lipase with low but detectable phospholipase activity. Mediates margination of triglyceride-rich lipoprotein particles in capillaries. Recruited to its site of action on the luminal surface of vascular endothelium by binding to GPIHBP1 and cell surface heparan sulfate proteoglycans. The polypeptide is Lipoprotein lipase (LPL) (Bos taurus (Bovine)).